Here is a 143-residue protein sequence, read N- to C-terminus: Actin-depolymerizing factor 5 (143 aa).

An ADF-H domain is found at Gly-11 to Lys-143.

The protein belongs to the actin-binding proteins ADF family. Expressed exclusively in root tip meristem.

Its subcellular location is the cytoplasm. The protein localises to the cytoskeleton. Actin-depolymerizing protein. Severs actin filaments (F-actin) and binds to actin monomers. The protein is Actin-depolymerizing factor 5 (ADF5) of Arabidopsis thaliana (Mouse-ear cress).